A 646-amino-acid polypeptide reads, in one-letter code: MSSPDFKLKAEFKPKGSQLEAIAGLVKDLEKNPEKSKQTLLGVTGSGKTFTIANVIEKVQKPTLVIAHNKTLAAQLYNEFKEFFPENRVEYFVSYYDYYQPESYIPQKDQYIEKDAQINPKIEQMRLRATSAILSRRDVIIVASVSCIYGLGNPELFKEMGFELKVGEKIKRSDIIEKLVDIQYERNDMELVPGRFRVKGDTLDIIPGYQDDILRVEMFGDEIDRIYELDPKNMSKKHEIDSFYMYPAKHFVIPEEDKKNAINSILKELDEWLPNLDMLKSHRLKQKTLYDIEMIEETGSCKGIENYSRHFENRKEGEPAYCLLDYFPEDFLIVIDESHQTIPQIRGMYKGDRSRKQSLIDYGFRLPSAYDNRPLKFEEFKKYMNNVIFVSATPGEYELDNSNQVVEQIIRPTGLLDPEVEIRPIENQVEDIIKETEKMVEKGERVLITTLTKRLAEELTEYLAKRNVKARYLHSDIDTIERTEIIRNLRLGKFDCLVGINLLREGLDIPEVGFVGILDADKEGFLRNDKSLIQTIGRAARNANSKVVLYAGKMTDSIKKAVSETERRRKLQKEHNEKHNITPQTIVKPIREKVVDISDVKHIPVADIPNVIVELEAEMYEAAEALEFEKAIKIRDTIAKLKKKIK.

In terms of domain architecture, Helicase ATP-binding spans Leu-29–Arg-411. Gly-42–Thr-49 contacts ATP. The Beta-hairpin signature appears at Tyr-95 to Ile-118. The Helicase C-terminal domain occupies Gln-428–Ile-590. A UVR domain is found at Pro-609–Lys-644.

Belongs to the UvrB family. In terms of assembly, forms a heterotetramer with UvrA during the search for lesions. Interacts with UvrC in an incision complex.

It is found in the cytoplasm. Its function is as follows. The UvrABC repair system catalyzes the recognition and processing of DNA lesions. A damage recognition complex composed of 2 UvrA and 2 UvrB subunits scans DNA for abnormalities. Upon binding of the UvrA(2)B(2) complex to a putative damaged site, the DNA wraps around one UvrB monomer. DNA wrap is dependent on ATP binding by UvrB and probably causes local melting of the DNA helix, facilitating insertion of UvrB beta-hairpin between the DNA strands. Then UvrB probes one DNA strand for the presence of a lesion. If a lesion is found the UvrA subunits dissociate and the UvrB-DNA preincision complex is formed. This complex is subsequently bound by UvrC and the second UvrB is released. If no lesion is found, the DNA wraps around the other UvrB subunit that will check the other stand for damage. The chain is UvrABC system protein B from Methanococcus maripaludis (strain DSM 14266 / JCM 13030 / NBRC 101832 / S2 / LL).